A 353-amino-acid polypeptide reads, in one-letter code: Phosphoribosylformylglycinamidine cyclo-ligase (353 aa).

Belongs to the AIR synthase family.

It localises to the cytoplasm. The catalysed reaction is 2-formamido-N(1)-(5-O-phospho-beta-D-ribosyl)acetamidine + ATP = 5-amino-1-(5-phospho-beta-D-ribosyl)imidazole + ADP + phosphate + H(+). Its pathway is purine metabolism; IMP biosynthesis via de novo pathway; 5-amino-1-(5-phospho-D-ribosyl)imidazole from N(2)-formyl-N(1)-(5-phospho-D-ribosyl)glycinamide: step 2/2. In Ralstonia nicotianae (strain ATCC BAA-1114 / GMI1000) (Ralstonia solanacearum), this protein is Phosphoribosylformylglycinamidine cyclo-ligase.